The sequence spans 26 residues: Aralin B chain (26 aa).

As to quaternary structure, disulfide-linked dimer of A and B chains. In terms of processing, glycosylated. High-mannose type oligosaccharides.

In terms of biological role, lectin specific for galactose (Gal) and its derivatives. Induces apoptosis. Has cytotoxic activity against several human cancer cell lines. Is less cytotoxic to normal human cells. This Aralia elata (Japanese angelica tree) protein is Aralin B chain.